Reading from the N-terminus, the 199-residue chain is MIQISDTAQTHFRKLIEREGAPGMGVRLSAVDPGTPRADARLEFAEPSDLLGDEWAVDCDGFTLYVDAASVGWLDGAEIDIVAGTAGAQQLTIKAPRIKGEAPGDAASLVERVHWVVENEINPQLASHGGKVAVQEVSAEGVVLLRFGGGCQGCGMADVTLKQGIEKTLMGRVPGVTAVRDATDHDSGHAPYIPRGNAA.

[4Fe-4S] cluster contacts are provided by Cys-151 and Cys-154.

This sequence belongs to the NfuA family. Homodimer. Requires [4Fe-4S] cluster as cofactor.

Its function is as follows. Involved in iron-sulfur cluster biogenesis. Binds a 4Fe-4S cluster, can transfer this cluster to apoproteins, and thereby intervenes in the maturation of Fe/S proteins. Could also act as a scaffold/chaperone for damaged Fe/S proteins. This is Fe/S biogenesis protein NfuA from Stenotrophomonas maltophilia (strain R551-3).